Reading from the N-terminus, the 356-residue chain is CX3C chemokine receptor 1 (356 aa).

Residues 1–26 (MTTLYSDWATESFEYDESSEACFIGD) lie on the Extracellular side of the membrane. The helical transmembrane segment at 27-47 (IVAFGTIFLSIFYSLVFAFGL) threads the bilayer. The Cytoplasmic portion of the chain corresponds to 48-68 (VGNLLVVCALTSSRKPKSITD). A helical membrane pass occupies residues 69–89 (IYLLNLALSDLLFVATLPFWT). At 90 to 105 (HYVISEQGFHNAVCKL) the chain is on the extracellular side. A disulfide bridge connects residues cysteine 103 and cysteine 176. The helical transmembrane segment at 106–126 (TTALFFIGFFGGIFFITVISI) threads the bilayer. Residues 127–147 (DRYMAIVLAANSINNRTVQHG) lie on the Cytoplasmic side of the membrane. Residues 148-168 (VTTSLGVWAAAILVAAPQFMF) traverse the membrane as a helical segment. Residues 169–195 (TKQKGNECLGDYPEVLQDIWPVLRNTE) are Extracellular-facing. A helical transmembrane segment spans residues 196-216 (ANFLGFLLPVLIMSYCYFRII). Residues 217 to 232 (QTLFSCKNHKKAKAIK) lie on the Cytoplasmic side of the membrane. The chain crosses the membrane as a helical span at residues 233-253 (LILLVVIVFFLFWTPYNVMIF). Residues 254–277 (LETLKLYGFFPNCDMKRDLRLALS) lie on the Extracellular side of the membrane. Residues 278–298 (VTETVAFSHCCLNPLIYAFAG) traverse the membrane as a helical segment. The Cytoplasmic portion of the chain corresponds to 299–356 (QKFRRYLRHLSRKCQAVLCGRPVHVSFSPSESQRSRQESIVSSNFTHYTSDGDASLLL). Threonine 347 bears the Phosphothreonine mark.

Belongs to the G-protein coupled receptor 1 family. Found in a ternary complex with CX3CL1 and ITGAV:ITGB3 or ITGA4:ITGB1. This protein is not N-glycosylated which is unusual for G-protein-coupled receptors.

It localises to the cell membrane. Functionally, receptor for the C-X3-C chemokine fractalkine (CX3CL1) present on many early leukocyte cells; CX3CR1-CX3CL1 signaling exerts distinct functions in different tissue compartments, such as immune response, inflammation, cell adhesion and chemotaxis. CX3CR1-CX3CL1 signaling mediates cell migratory functions. Responsible for the recruitment of natural killer (NK) cells to inflamed tissues. Acts as a regulator of inflammation process leading to atherogenesis by mediating macrophage and monocyte recruitment to inflamed atherosclerotic plaques, promoting cell survival. Involved in airway inflammation by promoting interleukin 2-producing T helper (Th2) cell survival in inflamed lung. Involved in the migration of circulating monocytes to non-inflamed tissues, where they differentiate into macrophages and dendritic cells. Acts as a negative regulator of angiogenesis, probably by promoting macrophage chemotaxis. Plays a key role in brain microglia by regulating inflammatory response in the central nervous system (CNS) and regulating synapse maturation. Required to restrain the microglial inflammatory response in the CNS and the resulting parenchymal damage in response to pathological stimuli. Involved in brain development by participating in synaptic pruning, a natural process during which brain microglia eliminates extra synapses during postnatal development. Synaptic pruning by microglia is required to promote the maturation of circuit connectivity during brain development. Acts as an important regulator of the gut microbiota by controlling immunity to intestinal bacteria and fungi. Expressed in lamina propria dendritic cells in the small intestine, which form transepithelial dendrites capable of taking up bacteria in order to provide defense against pathogenic bacteria. Required to initiate innate and adaptive immune responses against dissemination of commensal fungi (mycobiota) component of the gut: expressed in mononuclear phagocytes (MNPs) and acts by promoting induction of antifungal IgG antibodies response to confer protection against disseminated C.albicans or C.auris infection. Also acts as a receptor for C-C motif chemokine CCL26, inducing cell chemotaxis. In Oryctolagus cuniculus (Rabbit), this protein is CX3C chemokine receptor 1.